Here is a 505-residue protein sequence, read N- to C-terminus: Adenylosuccinate synthetase, chloroplastic (505 aa).

The transit peptide at Met-1–Leu-60 directs the protein to the chloroplast. GTP-binding positions include Gly-92–Lys-98 and Gly-120–Thr-122. The active-site Proton acceptor is Asp-93. Mg(2+)-binding residues include Asp-93 and Gly-120. Residues Asp-93–Lys-96, Asn-118–His-121, Thr-210, Arg-224, Gln-304, Thr-319, and Arg-383 each bind IMP. Catalysis depends on His-121, which acts as the Proton donor. Thr-379 to Arg-385 is a binding site for substrate. GTP-binding positions include Arg-385, Lys-411–Asp-413, and Gly-494–Gly-496.

It belongs to the adenylosuccinate synthetase family. As to quaternary structure, homodimer. It depends on Mg(2+) as a cofactor.

The protein resides in the plastid. The protein localises to the chloroplast. The enzyme catalyses IMP + L-aspartate + GTP = N(6)-(1,2-dicarboxyethyl)-AMP + GDP + phosphate + 2 H(+). The protein operates within purine metabolism; AMP biosynthesis via de novo pathway; AMP from IMP: step 1/2. Plays an important role in the de novo pathway and in the salvage pathway of purine nucleotide biosynthesis. Catalyzes the first committed step in the biosynthesis of AMP from IMP. This is Adenylosuccinate synthetase, chloroplastic from Nicotiana tabacum (Common tobacco).